Reading from the N-terminus, the 482-residue chain is Guanine nucleotide exchange factor SRM1 (482 aa).

Over residues 1–11 the composition is skewed to polar residues; it reads MVKRTVATNGD. Positions 1-22 are disordered; the sequence is MVKRTVATNGDASGAHRAKKMS. A Nuclear localization signal motif is present at residues 15-26; that stretch reads AHRAKKMSKTHA. RCC1 repeat units lie at residues 45 to 101, 103 to 152, 183 to 238, 239 to 291, 292 to 347, 349 to 411, and 412 to 466; these read PLDI…ALDE, SNVW…TPAK, NGEV…FLDE, EGMV…ALTK, DNKL…ILSQ, GDLY…AVAQ, and NGIA…SGGV. The interval 128–158 is disordered; the sequence is KDMDADDSSDDEDGDLNELESTPAKIPRESF. A compositionally biased stretch (acidic residues) spans 131-145; sequence DADDSSDDEDGDLNE. Phosphoserine is present on residues Ser135 and Ser136.

In terms of assembly, component of a multicomponent complex composed of six to seven proteins, which has a collective molecular mass greater than 150 kDa. Interacts with GSP1 and YRB2. Post-translationally, phosphorylated; possibly by KSP1.

The protein localises to the nucleus. In terms of biological role, guanine nucleotide exchange factor that promotes the exchange of GSP1/GSP2-bound GDP by GTP and controls RNA metabolism and transport. Involved in yeast pheromone response pathway and in mRNA metabolism. Involved in nuclear pore complex (NPC) assembly and required for mRNA and ribosome nuclear export. Binds chromatin and is involved NPC-mediated transcriptional control. This chain is Guanine nucleotide exchange factor SRM1 (SRM1), found in Saccharomyces cerevisiae (strain ATCC 204508 / S288c) (Baker's yeast).